The following is a 602-amino-acid chain: Oligoendopeptidase F, chromosomal (602 aa).

Histidine 388 contributes to the Zn(2+) binding site. Glutamate 389 is an active-site residue. Zn(2+) contacts are provided by histidine 392 and histidine 395.

The protein belongs to the peptidase M3B family. Zn(2+) serves as cofactor.

Hydrolyzes peptides containing between 7 and 17 amino acids with a rather wide specificity. The polypeptide is Oligoendopeptidase F, chromosomal (pepF2) (Lactococcus lactis subsp. cremoris (Streptococcus cremoris)).